A 489-amino-acid chain; its full sequence is Cobyric acid synthase (489 aa).

In terms of domain architecture, GATase cobBQ-type spans 252–441 (ALTIGVIQLP…IHGIFANTEF (190 aa)). The active-site Nucleophile is C330. H433 is an active-site residue.

This sequence belongs to the CobB/CobQ family. CobQ subfamily.

It participates in cofactor biosynthesis; adenosylcobalamin biosynthesis. In terms of biological role, catalyzes amidations at positions B, D, E, and G on adenosylcobyrinic A,C-diamide. NH(2) groups are provided by glutamine, and one molecule of ATP is hydrogenolyzed for each amidation. This is Cobyric acid synthase from Herpetosiphon aurantiacus (strain ATCC 23779 / DSM 785 / 114-95).